The sequence spans 347 residues: FK506-binding protein-like (347 aa).

Positions 1-36 (METSLISPMKENNTAQPQQREENTQQNLNAAVPIKQ) are disordered. At Thr3 the chain carries Phosphothreonine. 3 TPR repeats span residues 208–241 (AKEEHRRGTELFRAGNPQGAARCYGRALRLLLTL), 250–283 (TILHANLAACQLLLGHPQLAAQSCDRVLEREPGH), and 284–317 (LKALYRRGVAQAALGDLDKATADLKKVLAVDPKN).

Forms a ternary complex with CDKN1A/p21 and HSP90AB1/Hsp90.

Functionally, may be involved in response to X-ray. Regulates p21 protein stability by binding to Hsp90 and p21. The sequence is that of FK506-binding protein-like (Fkbpl) from Rattus norvegicus (Rat).